Here is a 102-residue protein sequence, read N- to C-terminus: Co-chaperonin GroES (102 aa).

Belongs to the GroES chaperonin family. In terms of assembly, heptamer of 7 subunits arranged in a ring. Interacts with the chaperonin GroEL.

It is found in the cytoplasm. In terms of biological role, together with the chaperonin GroEL, plays an essential role in assisting protein folding. The GroEL-GroES system forms a nano-cage that allows encapsulation of the non-native substrate proteins and provides a physical environment optimized to promote and accelerate protein folding. GroES binds to the apical surface of the GroEL ring, thereby capping the opening of the GroEL channel. The sequence is that of Co-chaperonin GroES from Streptomyces avermitilis (strain ATCC 31267 / DSM 46492 / JCM 5070 / NBRC 14893 / NCIMB 12804 / NRRL 8165 / MA-4680).